A 1113-amino-acid chain; its full sequence is Nucleoporin NUP116/NSP116 (1113 aa).

Residues 1–35 (MFGVSRGAFPSATTQPFGSTGSTFGGQQQQQQPVA) form a disordered region. FG repeat units lie at residues 2-3 (FG), 17-18 (FG), 24-25 (FG), and 40-41 (FG). Residues 13-33 (TTQPFGSTGSTFGGQQQQQQP) are compositionally biased toward low complexity. Residues 49–91 (TQAPAFGNFGNQTSNSPFGMSGSTTANGTPFGQSQLTNNNASG) form a disordered region. One copy of the GLFG 1; approximate repeat lies at 55–58 (GNFG). 3 FG repeats span residues 66 to 67 (FG), 79 to 80 (FG), and 94 to 95 (FG). The interval 92 to 172 (SIFGGMGNNT…AGRKFGTSQN (81 aa)) is interaction with AFG2. The interval 110-166 (VVPNSTAGTSIKPFTTFEEKDPTTGVINVFQSITCMPEYRNFSFEELRFQDYQAGRK) is GLE2 binding sequence (GLEBS). The interaction with MEX67, not KAP95 stretch occupies residues 160-362 (DYQAGRKFGT…AKPASGGLFG (203 aa)). FG repeat units lie at residues 167–168 (FG) and 189–190 (FG). The GLFG 2 repeat unit spans residues 205–208 (GLFG). The stretch at 214 to 217 (GMFG) is one GLFG 3; approximate repeat. Residues 224–227 (GGFG) form a GLFG 4; approximate repeat. Residues 235 to 238 (GLFG) form a GLFG 5 repeat. Residues 249–250 (FG) form an FG 10 repeat. GLFG repeat units follow at residues 259-262 (GLFG), 276-279 (GLFG), and 288-291 (GLFG). Residues 265 to 279 (TNNPTNGTNNTGLFG) are compositionally biased toward low complexity. Positions 265–341 (TNNPTNGTNN…SNANANGGAF (77 aa)) are disordered. A compositionally biased stretch (polar residues) spans 280–304 (QQNSNTNGGLFGQQQNSFGANNVSN). One copy of the FG 11 repeat lies at 297–298 (FG). The stretch at 306 to 309 (GAFG) is one GLFG 9; approximate repeat. The stretch at 327-330 (GIFG) is one GLFG 10; approximate repeat. Residues 330–341 (GQSNANANGGAF) are compositionally biased toward low complexity. A GLFG 11; approximate repeat occupies 339-342 (GAFG). The FG 12 repeat unit spans residues 351 to 352 (FG). A GLFG 12 repeat occupies 359 to 362 (GLFG). Residues 362–535 (GQSAGSKAFG…GAKPTGFGNT (174 aa)) are sufficient for interaction with MEX67 and KAP95. Residues 370 to 371 (FG) form an FG 13 repeat. The disordered stretch occupies residues 371 to 606 (GMNTNPTGTT…NPASTSGGLF (236 aa)). GLFG repeat units follow at residues 382–385 (GLFG), 395–398 (GLFG), 407–410 (GLFG), and 420–423 (GLFG). The segment covering 410-438 (GQNNQSQNQSGLFGQQNSSNAFGQPQQQG) has biased composition (low complexity). One copy of the FG 14 repeat lies at 431–432 (FG). GLFG repeat units lie at residues 439 to 442 (GLFG) and 448 to 451 (GLFG). Positions 451–464 (GQQQGASTFASGNA) are enriched in polar residues. Low complexity-rich tracts occupy residues 465 to 478 (QNNSIFGQNNQQQQ) and 485 to 522 (GQQNNQSQSQPGGLFGQTNQNNNQPFGQNGLQQPQQNN). One copy of the FG 15 repeat lies at 470-471 (FG). 2 GLFG repeats span residues 482–485 (GLFG) and 497–500 (GLFG). 3 FG repeats span residues 510 to 511 (FG), 525 to 526 (FG), and 532 to 533 (FG). The span at 532–569 (FGNTSLFSNSTTNQSNGISGNNLQQQSGGLFQNKQQPA) shows a compositional bias: polar residues. An interaction with KAP95, not MEX67 region spans residues 536–732 (SLFSNSTTNQ…QSQNALQQQQ (197 aa)). GLFG repeat units lie at residues 572 to 575 (GLFG), 585 to 588 (GLFG), and 604 to 607 (GLFG). Polar residues predominate over residues 588–603 (GNNQVANQNNPASTSG). One copy of the FG 19 repeat lies at 616 to 617 (FG). One copy of the GLFG 24; approximate repeat lies at 630–633 (GIFG). GLFG repeat units lie at residues 648 to 651 (GLFG), 665 to 668 (GLFG), and 683 to 686 (GLFG). A compositionally biased stretch (low complexity) spans 678–691 (SNGSTGLFGSNNTS). Disordered stretches follow at residues 678–736 (SNGS…QQQR) and 868–939 (SEEK…ENVA). Residues 692–708 (QSTNAGGLFQNNTSTNT) show a composition bias toward polar residues. Low complexity predominate over residues 719–736 (QSMAQSQNALQQQQQQQR). A Phosphoserine modification is found at serine 886. Over residues 916–939 (NDGEDSATKHHSRNMDEENKENVA) the composition is skewed to basic and acidic residues. Residues 967–1109 (NENYYISPSL…GTYVFIVNHA (143 aa)) enclose the Peptidase S59 domain. The tract at residues 967-1113 (NENYYISPSL…FIVNHAAEQT (147 aa)) is interaction with NUP82 NPC subcomplex. Residues 969–1108 (NYYISPSLDT…SGTYVFIVNH (140 aa)) are nucleoporin RNA-binding motif (NRM).

It belongs to the nucleoporin GLFG family. As to quaternary structure, component of the nuclear pore complex (NPC). NPC constitutes the exclusive means of nucleocytoplasmic transport. NPCs allow the passive diffusion of ions and small molecules and the active, nuclear transport receptor-mediated bidirectional transport of macromolecules such as proteins, RNAs, ribonucleoparticles (RNPs), and ribosomal subunits across the nuclear envelope. Due to its 8-fold rotational symmetry, all subunits are present with 8 copies or multiples thereof. NUP116 interacts with the NUP82 subcomplex and GLE2. Through its FG repeats it interacts with numerous karyopherins including KAP95, PSE1 (GSP1-GDP dependent), MEX67, and to homomeric RNA. Interacts with CEX1. Interacts (via N-terminus) with AFG2 (via N-terminus).

The protein resides in the nucleus. It localises to the nuclear pore complex. It is found in the nucleus membrane. Functionally, functions as a component of the nuclear pore complex (NPC). NPC components, collectively referred to as nucleoporins (NUPs), can play the role of both NPC structural components and of docking or interaction partners for transiently associated nuclear transport factors. Active directional transport is assured by both, a Phe-Gly (FG) repeat affinity gradient for these transport factors across the NPC and a transport cofactor concentration gradient across the nuclear envelope (GSP1 and GSP2 GTPases associated predominantly with GTP in the nucleus, with GDP in the cytoplasm). Plays an important role in several nuclear export and import pathways including poly(A)+ RNA, tRNA, pre-ribosome, and protein transport. By binding ATPase AFG2, promotes AFG2-mediated release of shuttling protein RLP24 from pre-60S ribosomal particles. This Saccharomyces cerevisiae (strain ATCC 204508 / S288c) (Baker's yeast) protein is Nucleoporin NUP116/NSP116 (NUP116).